Consider the following 72-residue polypeptide: Inner membrane protein YmgF (72 aa).

Residues 1-9 (MNNSNNLDY) are Cytoplasmic-facing. The helical transmembrane segment at 10-30 (FTLYIIFSIAFMLITLLVILI) threads the bilayer. Over 31–34 (AKPS) the chain is Periplasmic. Residues 35–55 (TGLGEVLVTINLLNALVWLAI) form a helical membrane-spanning segment. Residues 56–72 (NLVNRLRERLVNHRDQQ) are Cytoplasmic-facing.

Interacts with FtsL, FtsQ, FtsI, FtsN, and probably many other cell division proteins.

Its subcellular location is the cell inner membrane. In terms of biological role, could be involved in cell division. May participate in the stabilization of the cell divisome under specific conditions. This chain is Inner membrane protein YmgF (ymgF), found in Escherichia coli (strain K12).